The chain runs to 685 residues: DNA-directed RNA polymerase subunit beta' (685 aa).

Zn(2+)-binding residues include cysteine 69, cysteine 71, cysteine 87, and cysteine 90. Mg(2+) contacts are provided by aspartate 492, aspartate 494, and aspartate 496.

This sequence belongs to the RNA polymerase beta' chain family. RpoC1 subfamily. In plastids the minimal PEP RNA polymerase catalytic core is composed of four subunits: alpha, beta, beta', and beta''. When a (nuclear-encoded) sigma factor is associated with the core the holoenzyme is formed, which can initiate transcription. The cofactor is Mg(2+). Requires Zn(2+) as cofactor.

The protein localises to the plastid. The protein resides in the chloroplast. The enzyme catalyses RNA(n) + a ribonucleoside 5'-triphosphate = RNA(n+1) + diphosphate. In terms of biological role, DNA-dependent RNA polymerase catalyzes the transcription of DNA into RNA using the four ribonucleoside triphosphates as substrates. The sequence is that of DNA-directed RNA polymerase subunit beta' from Dioscorea elephantipes (Elephant's foot yam).